The following is a 643-amino-acid chain: Phosphomethylpyrimidine synthase (643 aa).

Substrate contacts are provided by residues Asn248, Met277, Tyr306, His342, 362-364, 403-406, and Glu442; these read SRG and DGLR. His446 contributes to the Zn(2+) binding site. Residue Tyr469 coordinates substrate. Zn(2+) is bound at residue His510. 3 residues coordinate [4Fe-4S] cluster: Cys590, Cys593, and Cys598.

It belongs to the ThiC family. Homodimer. The cofactor is [4Fe-4S] cluster.

The catalysed reaction is 5-amino-1-(5-phospho-beta-D-ribosyl)imidazole + S-adenosyl-L-methionine = 4-amino-2-methyl-5-(phosphooxymethyl)pyrimidine + CO + 5'-deoxyadenosine + formate + L-methionine + 3 H(+). Its pathway is cofactor biosynthesis; thiamine diphosphate biosynthesis. In terms of biological role, catalyzes the synthesis of the hydroxymethylpyrimidine phosphate (HMP-P) moiety of thiamine from aminoimidazole ribotide (AIR) in a radical S-adenosyl-L-methionine (SAM)-dependent reaction. The sequence is that of Phosphomethylpyrimidine synthase from Burkholderia mallei (strain NCTC 10247).